Here is a 129-residue protein sequence, read N- to C-terminus: Small ribosomal subunit protein uS11 (129 aa).

This sequence belongs to the universal ribosomal protein uS11 family. As to quaternary structure, part of the 30S ribosomal subunit. Interacts with proteins S7 and S18. Binds to IF-3.

In terms of biological role, located on the platform of the 30S subunit, it bridges several disparate RNA helices of the 16S rRNA. Forms part of the Shine-Dalgarno cleft in the 70S ribosome. In Geobacillus kaustophilus (strain HTA426), this protein is Small ribosomal subunit protein uS11.